We begin with the raw amino-acid sequence, 262 residues long: Phosphatidylserine decarboxylase proenzyme (262 aa).

Active-site charge relay system; for autoendoproteolytic cleavage activity residues include aspartate 86, histidine 142, and serine 226. Serine 226 serves as the catalytic Schiff-base intermediate with substrate; via pyruvic acid; for decarboxylase activity. Serine 226 carries the post-translational modification Pyruvic acid (Ser); by autocatalysis.

Belongs to the phosphatidylserine decarboxylase family. PSD-B subfamily. Prokaryotic type I sub-subfamily. Heterodimer of a large membrane-associated beta subunit and a small pyruvoyl-containing alpha subunit. Pyruvate is required as a cofactor. Post-translationally, is synthesized initially as an inactive proenzyme. Formation of the active enzyme involves a self-maturation process in which the active site pyruvoyl group is generated from an internal serine residue via an autocatalytic post-translational modification. Two non-identical subunits are generated from the proenzyme in this reaction, and the pyruvate is formed at the N-terminus of the alpha chain, which is derived from the carboxyl end of the proenzyme. The autoendoproteolytic cleavage occurs by a canonical serine protease mechanism, in which the side chain hydroxyl group of the serine supplies its oxygen atom to form the C-terminus of the beta chain, while the remainder of the serine residue undergoes an oxidative deamination to produce ammonia and the pyruvoyl prosthetic group on the alpha chain. During this reaction, the Ser that is part of the protease active site of the proenzyme becomes the pyruvoyl prosthetic group, which constitutes an essential element of the active site of the mature decarboxylase.

It is found in the cell membrane. It catalyses the reaction a 1,2-diacyl-sn-glycero-3-phospho-L-serine + H(+) = a 1,2-diacyl-sn-glycero-3-phosphoethanolamine + CO2. It functions in the pathway phospholipid metabolism; phosphatidylethanolamine biosynthesis; phosphatidylethanolamine from CDP-diacylglycerol: step 2/2. In terms of biological role, catalyzes the formation of phosphatidylethanolamine (PtdEtn) from phosphatidylserine (PtdSer). The chain is Phosphatidylserine decarboxylase proenzyme from Bacillus mycoides (strain KBAB4) (Bacillus weihenstephanensis).